The primary structure comprises 800 residues: Serine/threonine-protein kinase KIN4 (800 aa).

One can recognise a Protein kinase domain in the interval 46–313 (YIIGSTLGEG…LQTIKRHVWL (268 aa)). ATP is bound by residues 52-60 (LGEGEFGKV) and Lys-80. Asp-175 (proton acceptor) is an active-site residue. Disordered stretches follow at residues 331 to 397 (LQKE…GSKV) and 438 to 487 (SARH…TSFT). A compositionally biased stretch (low complexity) spans 348-358 (STYSSSASSYS). Residues Ser-365 and Ser-388 each carry the phosphoserine modification. Composition is skewed to polar residues over residues 380–395 (QLAT…STGS) and 459–473 (GSPT…PSSK). Ser-521 carries the post-translational modification Phosphoserine. Disordered stretches follow at residues 629–661 (EPTN…DKDS) and 678–754 (SLNG…PGRS). The segment covering 678-721 (SLNGSRSTVESRTSKGNAPPVSSRNPSGQSNRSNIKITQQQPRN) has biased composition (polar residues). The segment covering 727–740 (PNPDKKINDNRIRD) has biased composition (basic and acidic residues). Ser-748 is subject to Phosphoserine.

Belongs to the protein kinase superfamily. Ser/Thr protein kinase family.

The catalysed reaction is L-seryl-[protein] + ATP = O-phospho-L-seryl-[protein] + ADP + H(+). It carries out the reaction L-threonyl-[protein] + ATP = O-phospho-L-threonyl-[protein] + ADP + H(+). This protein is probably a serine/threonine protein kinase. The sequence is that of Serine/threonine-protein kinase KIN4 (KIN4) from Saccharomyces cerevisiae (strain ATCC 204508 / S288c) (Baker's yeast).